Consider the following 311-residue polypeptide: p-hydroxybenzoic acid efflux pump subunit AaeA (311 aa).

Residues 11-31 (IAITLILVLLGIIAIFKAWVF) traverse the membrane as a helical segment.

This sequence belongs to the membrane fusion protein (MFP) (TC 8.A.1) family.

It is found in the cell inner membrane. In terms of biological role, forms an efflux pump with AaeB. This is p-hydroxybenzoic acid efflux pump subunit AaeA from Serratia proteamaculans (strain 568).